A 300-amino-acid chain; its full sequence is Ribosomal protein L11 methyltransferase (300 aa).

S-adenosyl-L-methionine is bound by residues T152, G173, D195, and N234.

Belongs to the methyltransferase superfamily. PrmA family.

The protein resides in the cytoplasm. It carries out the reaction L-lysyl-[protein] + 3 S-adenosyl-L-methionine = N(6),N(6),N(6)-trimethyl-L-lysyl-[protein] + 3 S-adenosyl-L-homocysteine + 3 H(+). Its function is as follows. Methylates ribosomal protein L11. The chain is Ribosomal protein L11 methyltransferase from Burkholderia multivorans (strain ATCC 17616 / 249).